The sequence spans 506 residues: Glutamate--tRNA ligase (506 aa).

A 'HIGH' region motif is present at residues 24–34 (PSPTGTPHVGL). The segment at 124–147 (TPEEVEQRHRAKGEDPKRGYDNYD) is disordered. The segment covering 128 to 147 (VEQRHRAKGEDPKRGYDNYD) has biased composition (basic and acidic residues). A 'KMSKS' region motif is present at residues 268 to 272 (KLSKR). Lys-271 lines the ATP pocket.

It belongs to the class-I aminoacyl-tRNA synthetase family. Glutamate--tRNA ligase type 1 subfamily. Monomer.

Its subcellular location is the cytoplasm. It catalyses the reaction tRNA(Glu) + L-glutamate + ATP = L-glutamyl-tRNA(Glu) + AMP + diphosphate. Functionally, catalyzes the attachment of glutamate to tRNA(Glu) in a two-step reaction: glutamate is first activated by ATP to form Glu-AMP and then transferred to the acceptor end of tRNA(Glu). The polypeptide is Glutamate--tRNA ligase (Kocuria rhizophila (strain ATCC 9341 / DSM 348 / NBRC 103217 / DC2201)).